The chain runs to 431 residues: Histidinol dehydrogenase (431 aa).

NAD(+) contacts are provided by Tyr-130, Gln-191, and Asn-214. Positions 237, 261, and 264 each coordinate substrate. Zn(2+)-binding residues include Gln-261 and His-264. Catalysis depends on proton acceptor residues Glu-329 and His-330. Substrate is bound by residues His-330, Asp-363, Glu-417, and His-422. Asp-363 lines the Zn(2+) pocket. Position 422 (His-422) interacts with Zn(2+).

Belongs to the histidinol dehydrogenase family. Requires Zn(2+) as cofactor.

It catalyses the reaction L-histidinol + 2 NAD(+) + H2O = L-histidine + 2 NADH + 3 H(+). It participates in amino-acid biosynthesis; L-histidine biosynthesis; L-histidine from 5-phospho-alpha-D-ribose 1-diphosphate: step 9/9. Its function is as follows. Catalyzes the sequential NAD-dependent oxidations of L-histidinol to L-histidinaldehyde and then to L-histidine. The sequence is that of Histidinol dehydrogenase from Psychrobacter arcticus (strain DSM 17307 / VKM B-2377 / 273-4).